The primary structure comprises 226 residues: Cytidylate kinase (226 aa).

12–20 (GPSGAGKGT) is an ATP binding site.

It belongs to the cytidylate kinase family. Type 1 subfamily.

It localises to the cytoplasm. The enzyme catalyses CMP + ATP = CDP + ADP. It catalyses the reaction dCMP + ATP = dCDP + ADP. The chain is Cytidylate kinase from Xanthomonas campestris pv. campestris (strain B100).